Consider the following 587-residue polypeptide: Aspartate--tRNA ligase (587 aa).

Residue E174 coordinates L-aspartate. Residues 198–201 (QTFK) are aspartate. R220 serves as a coordination point for L-aspartate. ATP is bound by residues 220 to 222 (RDE) and Q229. Residue H447 coordinates L-aspartate. E481 serves as a coordination point for ATP. R488 is a binding site for L-aspartate. Residue 533-536 (GLDR) participates in ATP binding.

This sequence belongs to the class-II aminoacyl-tRNA synthetase family. Type 1 subfamily. In terms of assembly, homodimer.

It is found in the cytoplasm. It catalyses the reaction tRNA(Asp) + L-aspartate + ATP = L-aspartyl-tRNA(Asp) + AMP + diphosphate. Catalyzes the attachment of L-aspartate to tRNA(Asp) in a two-step reaction: L-aspartate is first activated by ATP to form Asp-AMP and then transferred to the acceptor end of tRNA(Asp). This chain is Aspartate--tRNA ligase, found in Porphyromonas gingivalis (strain ATCC BAA-308 / W83).